The chain runs to 169 residues: Cell division inhibitor SulA (169 aa).

The interval 106-112 (ALRTGNY) is ftsZ binding. Residues 162–169 (KIHSNLYH) form a lon protease binding region.

It belongs to the SulA family. In terms of assembly, interacts with FtsZ. Is rapidly cleaved and degraded by the Lon protease once DNA damage is repaired.

Its function is as follows. Component of the SOS system and an inhibitor of cell division. Accumulation of SulA causes rapid cessation of cell division and the appearance of long, non-septate filaments. In the presence of GTP, binds a polymerization-competent form of FtsZ in a 1:1 ratio, thus inhibiting FtsZ polymerization and therefore preventing it from participating in the assembly of the Z ring. This mechanism prevents the premature segregation of damaged DNA to daughter cells during cell division. The protein is Cell division inhibitor SulA of Shigella boydii serotype 4 (strain Sb227).